A 278-amino-acid polypeptide reads, in one-letter code: E3 ubiquitin-protein ligase MARCHF5 (278 aa).

The RING-CH-type zinc finger occupies 6–75 (LQQMLDRSCW…PQCNAEYLIV (70 aa)). Zn(2+) is bound by residues Cys14, Cys17, Cys33, Cys35, His43, Cys46, Cys65, and Cys68. 4 consecutive transmembrane segments (helical) span residues 99 to 119 (FAAA…YGAV), 139 to 159 (PLFL…GKMI), 209 to 229 (ILCG…LMFS), and 238 to 258 (TILG…YFKQ).

As to quaternary structure, monomer and homodimer. Interacts with MFN1, MFN2, DNM1L and FIS1. Autoubiquitinated leading to degradation (short half-life).

It is found in the mitochondrion outer membrane. The enzyme catalyses S-ubiquitinyl-[E2 ubiquitin-conjugating enzyme]-L-cysteine + [acceptor protein]-L-lysine = [E2 ubiquitin-conjugating enzyme]-L-cysteine + N(6)-ubiquitinyl-[acceptor protein]-L-lysine.. Its pathway is protein modification; protein ubiquitination. Its function is as follows. Mitochondrial E3 ubiquitin-protein ligase that plays a crucial role in the control of mitochondrial morphology by acting as a positive regulator of mitochondrial fission and as an important regulator of immune response. Plays a crucial role in maintaining mitochondrial homeostasis by regulating the dynamics of mitochondria through the ubiquitination of key proteins involved in fission and fusion such as FIS1, DNM1L and MFN1. Acts as a critical determinant of mitotic apoptosis through both MCL1-dependent and -independent pathways. Turns off persistent immune signaling by degrading oligomeric complexes of retinoic acid-inducible gene I/DDX58 and mitochondrial antiviral-signaling protein/MAVS formed upon RNA virus infection. Promotes STING-mediated type-I interferon production via 'Lys-63'-linked ubiquitination of STING1 thereby preserving its activity and preventing the formation of inactive STING1 polymers. Plays also an essential role in the formation of PEX3-containing vesicles in the de novo biogenesis of peroxisomes from mitochondria. Acts as a regulator of NLRP3 inflammasome activation on the mitochondria by mediating the 'Lys-27'-linked polyubiquitination of NLRP3, positively regulating the NLRP3-NEK7 complex formation and NLRP3 oligomerization. This chain is E3 ubiquitin-protein ligase MARCHF5 (MARCHF5), found in Bos taurus (Bovine).